Here is a 152-residue protein sequence, read N- to C-terminus: Ribosomal RNA large subunit methyltransferase H (152 aa).

Residues leucine 68, glycine 100, and 119–124 contribute to the S-adenosyl-L-methionine site; that span reads FGPMTW.

The protein belongs to the RNA methyltransferase RlmH family. In terms of assembly, homodimer.

Its subcellular location is the cytoplasm. The catalysed reaction is pseudouridine(1915) in 23S rRNA + S-adenosyl-L-methionine = N(3)-methylpseudouridine(1915) in 23S rRNA + S-adenosyl-L-homocysteine + H(+). Its function is as follows. Specifically methylates the pseudouridine at position 1915 (m3Psi1915) in 23S rRNA. In Rhodospirillum centenum (strain ATCC 51521 / SW), this protein is Ribosomal RNA large subunit methyltransferase H.